The following is a 65-amino-acid chain: Small ribosomal subunit protein bS21 (65 aa).

The segment at 39 to 65 (EKPSIKRKKKAIAARKRALKKQRKMMD) is disordered. Positions 43 to 65 (IKRKKKAIAARKRALKKQRKMMD) are enriched in basic residues.

It belongs to the bacterial ribosomal protein bS21 family.

The sequence is that of Small ribosomal subunit protein bS21 from Pelobacter propionicus (strain DSM 2379 / NBRC 103807 / OttBd1).